The chain runs to 228 residues: UPF0173 metal-dependent hydrolase BLi03080/BL00413 (228 aa).

The protein belongs to the UPF0173 family.

The chain is UPF0173 metal-dependent hydrolase BLi03080/BL00413 from Bacillus licheniformis (strain ATCC 14580 / DSM 13 / JCM 2505 / CCUG 7422 / NBRC 12200 / NCIMB 9375 / NCTC 10341 / NRRL NRS-1264 / Gibson 46).